We begin with the raw amino-acid sequence, 428 residues long: Serine--tRNA ligase (428 aa).

231-233 (TSE) provides a ligand contact to L-serine. Residues 262–264 (RRE) and valine 278 contribute to the ATP site. An L-serine-binding site is contributed by glutamate 285. An ATP-binding site is contributed by 349-352 (ELTS). Threonine 384 serves as a coordination point for L-serine.

Belongs to the class-II aminoacyl-tRNA synthetase family. Type-1 seryl-tRNA synthetase subfamily. As to quaternary structure, homodimer. The tRNA molecule binds across the dimer.

The protein resides in the cytoplasm. The enzyme catalyses tRNA(Ser) + L-serine + ATP = L-seryl-tRNA(Ser) + AMP + diphosphate + H(+). It carries out the reaction tRNA(Sec) + L-serine + ATP = L-seryl-tRNA(Sec) + AMP + diphosphate + H(+). The protein operates within aminoacyl-tRNA biosynthesis; selenocysteinyl-tRNA(Sec) biosynthesis; L-seryl-tRNA(Sec) from L-serine and tRNA(Sec): step 1/1. Its function is as follows. Catalyzes the attachment of serine to tRNA(Ser). Is also able to aminoacylate tRNA(Sec) with serine, to form the misacylated tRNA L-seryl-tRNA(Sec), which will be further converted into selenocysteinyl-tRNA(Sec). This chain is Serine--tRNA ligase, found in Bifidobacterium adolescentis (strain ATCC 15703 / DSM 20083 / NCTC 11814 / E194a).